Here is a 585-residue protein sequence, read N- to C-terminus: Protein FAM151A (585 aa).

The chain crosses the membrane as a helical span at residues 14–34; the sequence is WVFASITCVSAVAIAAIVLAI.

The protein belongs to the menorin family.

The protein localises to the membrane. The polypeptide is Protein FAM151A (FAM151A) (Pongo abelii (Sumatran orangutan)).